We begin with the raw amino-acid sequence, 329 residues long: Acetyl-coenzyme A carboxylase carboxyl transferase subunit alpha (329 aa).

A CoA carboxyltransferase C-terminal domain is found at 40–294; it reads QLESLAARRR…RAAIERHLEQ (255 aa).

Belongs to the AccA family. In terms of assembly, acetyl-CoA carboxylase is a heterohexamer composed of biotin carboxyl carrier protein (AccB), biotin carboxylase (AccC) and two subunits each of ACCase subunit alpha (AccA) and ACCase subunit beta (AccD).

The protein resides in the cytoplasm. The catalysed reaction is N(6)-carboxybiotinyl-L-lysyl-[protein] + acetyl-CoA = N(6)-biotinyl-L-lysyl-[protein] + malonyl-CoA. The protein operates within lipid metabolism; malonyl-CoA biosynthesis; malonyl-CoA from acetyl-CoA: step 1/1. Its function is as follows. Component of the acetyl coenzyme A carboxylase (ACC) complex. First, biotin carboxylase catalyzes the carboxylation of biotin on its carrier protein (BCCP) and then the CO(2) group is transferred by the carboxyltransferase to acetyl-CoA to form malonyl-CoA. The sequence is that of Acetyl-coenzyme A carboxylase carboxyl transferase subunit alpha from Synechococcus sp. (strain CC9605).